The following is a 160-amino-acid chain: MGVTKKPDLKDPVLRARLAKGMGHNYYGEPAWPNDLLYIFPVVILGTIACTVGLAVLEPSIIGEPANPFATPLEILPEWYFFPVFQILRTVPNKFFGVLLMTSVPFGLLTVPFLENVNQFQNPFRRPVATSVFLIGTVISLWLGFGAVLPIEESLTLGLF.

A run of 4 helical transmembrane segments spans residues 36-56 (LLYI…GLAV), 68-88 (PFAT…FQIL), 95-115 (FFGV…PFLE), and 131-151 (SVFL…VLPI).

Belongs to the cytochrome b family. PetD subfamily. In terms of assembly, the 4 large subunits of the cytochrome b6-f complex are cytochrome b6, subunit IV (17 kDa polypeptide, petD), cytochrome f and the Rieske protein, while the 4 small subunits are petG, petL, petM and petN. The complex functions as a dimer.

Its subcellular location is the plastid. The protein localises to the chloroplast thylakoid membrane. Functionally, component of the cytochrome b6-f complex, which mediates electron transfer between photosystem II (PSII) and photosystem I (PSI), cyclic electron flow around PSI, and state transitions. This Welwitschia mirabilis (Tree tumbo) protein is Cytochrome b6-f complex subunit 4.